The chain runs to 101 residues: Replication restart protein PriB (101 aa).

The SSB domain maps to 1-101 (MTTNNLVLAG…LHAENVELKT (101 aa)).

Belongs to the PriB family. In terms of assembly, homodimer. Interacts with PriA and DnaT. Component of the replication restart primosome. Primosome assembly occurs via a 'hand-off' mechanism. PriA binds to replication forks, subsequently PriB then DnaT bind; DnaT then displaces ssDNA to generate the helicase loading substrate.

Involved in the restart of stalled replication forks, which reloads the replicative helicase on sites other than the origin of replication; the PriA-PriB pathway is the major replication restart pathway. During primosome assembly it facilitates complex formation between PriA and DnaT on DNA; stabilizes PriA on DNA. Stimulates the DNA unwinding activity of PriA helicase. The chain is Replication restart protein PriB from Shewanella pealeana (strain ATCC 700345 / ANG-SQ1).